A 269-amino-acid chain; its full sequence is Hydroxyacylglutathione hydrolase (269 aa).

The Zn(2+) site is built by His-56, His-58, Asp-60, His-61, His-115, Asp-137, and His-177.

The protein belongs to the metallo-beta-lactamase superfamily. Glyoxalase II family. Monomer. Requires Zn(2+) as cofactor.

The enzyme catalyses an S-(2-hydroxyacyl)glutathione + H2O = a 2-hydroxy carboxylate + glutathione + H(+). The protein operates within secondary metabolite metabolism; methylglyoxal degradation; (R)-lactate from methylglyoxal: step 2/2. In terms of biological role, thiolesterase that catalyzes the hydrolysis of S-D-lactoyl-glutathione to form glutathione and D-lactic acid. The chain is Hydroxyacylglutathione hydrolase from Leptospira borgpetersenii serovar Hardjo-bovis (strain JB197).